The primary structure comprises 409 residues: Microfibrillar-associated protein 3-like (409 aa).

Residues 1–28 (MDRLKSHLTVCFLPSVPFLILVSTLATA) form the signal peptide. Residues 29 to 149 (KSVTNSTLNG…LRVIFTSGDM (121 aa)) are Extracellular-facing. Residues Asn33, Asn37, Asn67, Asn111, and Asn135 are each glycosylated (N-linked (GlcNAc...) asparagine). The region spanning 47–141 (PVIIARTDHI…GTVNNTVTLR (95 aa)) is the Ig-like C2-type domain. A disulfide bridge connects residues Cys68 and Cys125. The helical transmembrane segment at 150 to 172 (GVYYMVVCLVAFTIVMVLNITRL) threads the bilayer. At 173 to 409 (CMMSSHLKKT…NTCIIYESHV (237 aa)) the chain is on the cytoplasmic side. At Tyr287 the chain carries Phosphotyrosine; by EGFR. Disordered stretches follow at residues 292–311 (SLKR…LHEQ) and 320–385 (SVHP…VLPP). Ser298, Ser303, Ser306, and Ser307 each carry phosphoserine. The segment covering 339-355 (EVKDVEETELSAEHSPE) has biased composition (basic and acidic residues). The span at 363-377 (VTSTELTSEEPTPVE) shows a compositional bias: low complexity.

As to expression, highly expressed in testis.

It localises to the cell membrane. The protein localises to the nucleus. Its subcellular location is the cytoplasm. May participate in the nuclear signaling of EGFR and MAPK1/ERK2. May a have a role in metastasis. The polypeptide is Microfibrillar-associated protein 3-like (MFAP3L) (Homo sapiens (Human)).